The chain runs to 208 residues: Mediator of RNA polymerase II transcription subunit 18 (208 aa).

S66 carries the post-translational modification Phosphoserine.

It belongs to the Mediator complex subunit 18 family. In terms of assembly, component of the Mediator complex, which is composed of MED1, MED4, MED6, MED7, MED8, MED9, MED10, MED11, MED12, MED13, MED13L, MED14, MED15, MED16, MED17, MED18, MED19, MED20, MED21, MED22, MED23, MED24, MED25, MED26, MED27, MED29, MED30, MED31, CCNC, CDK8 and CDC2L6/CDK11. The MED12, MED13, CCNC and CDK8 subunits form a distinct module termed the CDK8 module. Mediator containing the CDK8 module is less active than Mediator lacking this module in supporting transcriptional activation. Individual preparations of the Mediator complex lacking one or more distinct subunits have been variously termed ARC, CRSP, DRIP, PC2, SMCC and TRAP.

Its subcellular location is the nucleus. In terms of biological role, component of the Mediator complex, a coactivator involved in the regulated transcription of nearly all RNA polymerase II-dependent genes. Mediator functions as a bridge to convey information from gene-specific regulatory proteins to the basal RNA polymerase II transcription machinery. Mediator is recruited to promoters by direct interactions with regulatory proteins and serves as a scaffold for the assembly of a functional preinitiation complex with RNA polymerase II and the general transcription factors. The polypeptide is Mediator of RNA polymerase II transcription subunit 18 (Med18) (Mus musculus (Mouse)).